Consider the following 280-residue polypeptide: Exfoliative toxin A (280 aa).

A signal peptide spans 1–38 (MNNSKIISKVLLSLSLFTVGASAFVIQDELMQKNHAKA). Residues H110, D158, and S233 each act as charge relay system in the active site.

It belongs to the peptidase S1B family. It depends on Ca(2+) as a cofactor.

In terms of biological role, has serine protease-like properties and binds to the skin protein profilaggrin. Cleaves substrates after acidic residues. Exfoliative toxins cause impetigous diseases commonly referred as staphylococcal scalded skin syndrome (SSSS). In Staphylococcus aureus, this protein is Exfoliative toxin A (eta).